Reading from the N-terminus, the 93-residue chain is Large ribosomal subunit protein bL27 (93 aa).

Positions 1–8 are excised as a propeptide; sequence MIMDLQFF. Residues 8-29 are disordered; the sequence is FSHHKGGGSTANGRNSAGRRLG.

It belongs to the bacterial ribosomal protein bL27 family. In terms of processing, the N-terminus is cleaved by ribosomal processing cysteine protease Prp.

The sequence is that of Large ribosomal subunit protein bL27 from Limosilactobacillus reuteri (strain DSM 20016) (Lactobacillus reuteri).